We begin with the raw amino-acid sequence, 223 residues long: Ribose-5-phosphate isomerase A (223 aa).

Substrate-binding positions include Thr32–Thr35, Asp83–Asp86, and Lys96–Gly99. Catalysis depends on Glu105, which acts as the Proton acceptor. A substrate-binding site is contributed by Lys123.

Belongs to the ribose 5-phosphate isomerase family. Homodimer.

It catalyses the reaction aldehydo-D-ribose 5-phosphate = D-ribulose 5-phosphate. It functions in the pathway carbohydrate degradation; pentose phosphate pathway; D-ribose 5-phosphate from D-ribulose 5-phosphate (non-oxidative stage): step 1/1. In terms of biological role, catalyzes the reversible conversion of ribose-5-phosphate to ribulose 5-phosphate. This chain is Ribose-5-phosphate isomerase A, found in Acinetobacter baumannii (strain AYE).